The following is an 816-amino-acid chain: Mechanosensitive cation channel TMEM63B (816 aa).

Topologically, residues 1–46 (MLPYVIATLGSAGSTCKASTCSNSTKDYCYSARIRSTVLQGLPFGG) are extracellular. A helical transmembrane segment spans residues 47-71 (VPTVLALDFMCFLALLFVFSILRKV). 2 S-palmitoyl cysteine lipidation sites follow: C57 and C119. Residues 72 to 138 (AWDYGRLALV…KDDEIRDKCG (67 aa)) lie on the Cytoplasmic side of the membrane. The helical transmembrane segment at 139-171 (GDAVHYLSFQRHIIGLLVAVGVLSVGIVLPVNF) threads the bilayer. Over 172 to 195 (SGDLLENNAYSFGRTTIANLNSGN) the chain is Extracellular. A helical transmembrane segment spans residues 196 to 220 (NLLWLHTSFAFLYLLLTVYSMRRHT). At 221–420 (SKMRYKEDDL…IYWEHLSIRG (200 aa)) the chain is on the cytoplasmic side. Residues 224–419 (RYKEDDLVKR…NIYWEHLSIR (196 aa)) form an intracellular linker IL2; confers mechanosensitivity region. Residues C375 and C391 are each lipidated (S-palmitoyl cysteine). The helical transmembrane segment at 421–450 (FIWWIRCLVINVVLFILLFFLTTPAIIITT) threads the bilayer. Topologically, residues 451 to 465 (MDKFNVTKPVEYLNN) are extracellular. A helical transmembrane segment spans residues 466–495 (PIITQFFPTLLLWCFSALLPTIVYYSAFFE). Residues 496 to 499 (AHWT) lie on the Cytoplasmic side of the membrane. Residues 500-536 (RSGENRTTMHKCYTFLIFMVLLLPSLGLSSLDVFFRW) form a helical membrane-spanning segment. The Extracellular segment spans residues 537 to 559 (LFDKKFLAEAAVRFECVFLPDNG). The helical transmembrane segment at 560–592 (AFFVNYVIASAFIGNAMDLLRIPGLLMYMIRLC) threads the bilayer. A gating helix region spans residues 560–592 (AFFVNYVIASAFIGNAMDLLRIPGLLMYMIRLC). At 593–612 (LARSAAERRNVKRHQAYEFQ) the chain is on the cytoplasmic side. Residues 613–631 (FGAAYAWMMCVFTVVMTYS) form a helical membrane-spanning segment. Residues 632–634 (ITC) are Extracellular-facing. A helical transmembrane segment spans residues 635–659 (PIIVPFGLMYMLLKHLVDRYNLYYA). Residues 660–666 (YLPAKLD) are Cytoplasmic-facing. A helical transmembrane segment spans residues 667 to 695 (KKIHSGAVNQVVAAPILCLFWLLFFSTMR). The Extracellular segment spans residues 696 to 700 (TGFLA). A helical membrane pass occupies residues 701 to 721 (PTSMFTFVVLVITIVICLCHV). Residues C719 and C722 are each lipidated (S-palmitoyl cysteine). Residues 722-816 (CFGHFKYLSA…DSLIENEIRQ (95 aa)) are Cytoplasmic-facing.

The protein belongs to the CSC1 (TC 1.A.17) family. In terms of assembly, monomer. In terms of processing, palmitoylation is required for localization to the plasma membrane and stability.

It is found in the cell membrane. Its subcellular location is the lysosome membrane. The protein localises to the early endosome membrane. It carries out the reaction Ca(2+)(in) = Ca(2+)(out). The enzyme catalyses Mg(2+)(in) = Mg(2+)(out). It catalyses the reaction K(+)(in) = K(+)(out). The catalysed reaction is Na(+)(in) = Na(+)(out). It carries out the reaction Cs(+)(in) = Cs(+)(out). In terms of biological role, mechanosensitive cation channel with low conductance and high activation threshold. Osmosensitive cation channel preferentially activated by hypotonic stress. Also acts as a phospholipid scramblase in response to changes in membrane structure: upon changes in membrane curvature and thickness, alters its conformation and translocates phospholipids, thereby controlling plasma membrane lipid distribution. This chain is Mechanosensitive cation channel TMEM63B, found in Gallus gallus (Chicken).